A 576-amino-acid chain; its full sequence is K(+)/H(+) antiporter NhaP2 (576 aa).

The next 13 helical transmembrane spans lie at 6–26 (INSF…LSPM), 34–54 (ILLI…GGIL), 58–78 (YSTA…DGGM), 87–107 (VALW…TSIT), 109–129 (MMAA…GAIV), 163–183 (PMAV…DTEM), 185–205 (FSFM…LGLG), 219–239 (LADG…YAAS), 242–262 (LGGS…NKPT), 271–291 (VLDG…GLLL), 299–319 (ILIP…PVAV), 335–355 (WFIS…VFPM), and 359–379 (LPGA…SLLV). The 82-residue stretch at 405–486 (SGVEIYPSSE…LEALSNLFSQ (82 aa)) folds into the RCK C-terminal domain.

Belongs to the monovalent cation:proton antiporter 1 (CPA1) transporter (TC 2.A.36) family. NhaP2 subfamily.

It localises to the cell inner membrane. The catalysed reaction is K(+)(in) + H(+)(out) = K(+)(out) + H(+)(in). In terms of biological role, k(+)/H(+) antiporter that extrudes potassium in exchange for external protons and maintains the internal concentration of potassium under toxic levels. This Shewanella baltica (strain OS155 / ATCC BAA-1091) protein is K(+)/H(+) antiporter NhaP2.